The chain runs to 127 residues: Large ribosomal subunit protein bL19 (127 aa).

The protein belongs to the bacterial ribosomal protein bL19 family.

Functionally, this protein is located at the 30S-50S ribosomal subunit interface and may play a role in the structure and function of the aminoacyl-tRNA binding site. This Roseobacter denitrificans (strain ATCC 33942 / OCh 114) (Erythrobacter sp. (strain OCh 114)) protein is Large ribosomal subunit protein bL19.